The sequence spans 102 residues: Large ribosomal subunit protein bL21 (102 aa).

The protein belongs to the bacterial ribosomal protein bL21 family. Part of the 50S ribosomal subunit. Contacts protein L20.

Functionally, this protein binds to 23S rRNA in the presence of protein L20. The sequence is that of Large ribosomal subunit protein bL21 from Geobacter sulfurreducens (strain ATCC 51573 / DSM 12127 / PCA).